Reading from the N-terminus, the 259-residue chain is Undecaprenyl-diphosphatase 4 (259 aa).

The next 8 membrane-spanning stretches (helical) occupy residues 1-21 (MNWL…FLPI), 39-59 (AGLF…FIYY), 71-91 (FSKL…IGLL), 99-119 (ISKT…FLYV), 133-153 (ITYK…FPAI), 173-193 (AAYF…ILQF), 208-228 (SLIV…SWMI), and 239-259 (FAYY…TDVF).

The protein belongs to the UppP family.

It is found in the cell membrane. It catalyses the reaction di-trans,octa-cis-undecaprenyl diphosphate + H2O = di-trans,octa-cis-undecaprenyl phosphate + phosphate + H(+). In terms of biological role, catalyzes the dephosphorylation of undecaprenyl diphosphate (UPP). Confers resistance to bacitracin. The chain is Undecaprenyl-diphosphatase 4 from Bacillus thuringiensis subsp. konkukian (strain 97-27).